Consider the following 122-residue polypeptide: MIQMQTNLDVADNSGARRVMCIKVLGGSKRKYAHVGDIIVVSVKEAIPRGRVKKGDVMKAVVVRTAKDIRRVDGSVIRFDRNAAVLINNNKEPVGTRIFGPVPRELRAKNHMKIISLAPEVL.

This sequence belongs to the universal ribosomal protein uL14 family. Part of the 50S ribosomal subunit. Forms a cluster with proteins L3 and L19. In the 70S ribosome, L14 and L19 interact and together make contacts with the 16S rRNA in bridges B5 and B8.

Its function is as follows. Binds to 23S rRNA. Forms part of two intersubunit bridges in the 70S ribosome. The chain is Large ribosomal subunit protein uL14 from Azorhizobium caulinodans (strain ATCC 43989 / DSM 5975 / JCM 20966 / LMG 6465 / NBRC 14845 / NCIMB 13405 / ORS 571).